The primary structure comprises 208 residues: High frequency lysogenization protein HflD homolog (208 aa).

Belongs to the HflD family.

The protein resides in the cytoplasm. The protein localises to the cell inner membrane. The protein is High frequency lysogenization protein HflD homolog of Edwardsiella ictaluri (strain 93-146).